The following is a 66-amino-acid chain: Large ribosomal subunit protein bL33c (66 aa).

Belongs to the bacterial ribosomal protein bL33 family.

It localises to the plastid. It is found in the chloroplast. The chain is Large ribosomal subunit protein bL33c from Ipomoea purpurea (Common morning glory).